A 176-amino-acid polypeptide reads, in one-letter code: Ribosome maturation factor RimP (176 aa).

Belongs to the RimP family.

The protein resides in the cytoplasm. Functionally, required for maturation of 30S ribosomal subunits. In Mycolicibacterium vanbaalenii (strain DSM 7251 / JCM 13017 / BCRC 16820 / KCTC 9966 / NRRL B-24157 / PYR-1) (Mycobacterium vanbaalenii), this protein is Ribosome maturation factor RimP.